A 78-amino-acid polypeptide reads, in one-letter code: Small ribosomal subunit protein uS17 (78 aa).

The protein belongs to the universal ribosomal protein uS17 family. In terms of assembly, part of the 30S ribosomal subunit.

Functionally, one of the primary rRNA binding proteins, it binds specifically to the 5'-end of 16S ribosomal RNA. The chain is Small ribosomal subunit protein uS17 from Sinorhizobium medicae (strain WSM419) (Ensifer medicae).